We begin with the raw amino-acid sequence, 1203 residues long: DNA-directed RNA polymerase subunit beta (1203 aa).

A compositionally biased stretch (basic and acidic residues) spans 1174 to 1195 (AAQEAKAAFEAEEAEKATKAEA). The tract at residues 1174 to 1203 (AAQEAKAAFEAEEAEKATKAEATEEAAEQE) is disordered.

This sequence belongs to the RNA polymerase beta chain family. As to quaternary structure, the RNAP catalytic core consists of 2 alpha, 1 beta, 1 beta' and 1 omega subunit. When a sigma factor is associated with the core the holoenzyme is formed, which can initiate transcription.

It catalyses the reaction RNA(n) + a ribonucleoside 5'-triphosphate = RNA(n+1) + diphosphate. DNA-dependent RNA polymerase catalyzes the transcription of DNA into RNA using the four ribonucleoside triphosphates as substrates. The chain is DNA-directed RNA polymerase subunit beta from Streptococcus pneumoniae (strain P1031).